The primary structure comprises 382 residues: Galactokinase (382 aa).

34 to 37 contacts substrate; that stretch reads EHTD. 124-130 contacts ATP; sequence GAGLSSS. Mg(2+) is bound by residues Ser-130 and Glu-162. The active-site Proton acceptor is the Asp-174. Substrate is bound at residue Tyr-223.

It belongs to the GHMP kinase family. GalK subfamily.

It localises to the cytoplasm. It carries out the reaction alpha-D-galactose + ATP = alpha-D-galactose 1-phosphate + ADP + H(+). The protein operates within carbohydrate metabolism; galactose metabolism. Catalyzes the transfer of the gamma-phosphate of ATP to D-galactose to form alpha-D-galactose-1-phosphate (Gal-1-P). The polypeptide is Galactokinase (Cronobacter sakazakii (strain ATCC BAA-894) (Enterobacter sakazakii)).